A 359-amino-acid chain; its full sequence is Peptide chain release factor 1 (359 aa).

An N5-methylglutamine modification is found at glutamine 236.

This sequence belongs to the prokaryotic/mitochondrial release factor family. In terms of processing, methylated by PrmC. Methylation increases the termination efficiency of RF1.

It localises to the cytoplasm. Peptide chain release factor 1 directs the termination of translation in response to the peptide chain termination codons UAG and UAA. The chain is Peptide chain release factor 1 from Ureaplasma parvum serovar 3 (strain ATCC 27815 / 27 / NCTC 11736).